A 296-amino-acid polypeptide reads, in one-letter code: Probable GTP 3',8-cyclase (296 aa).

One can recognise a Radical SAM core domain in the interval 5-230 (EYGRVVTNLR…HRRTQYFTPK (226 aa)). Residue Arg14 coordinates GTP. Cys21 and Cys25 together coordinate [4Fe-4S] cluster. Tyr27 provides a ligand contact to S-adenosyl-L-methionine. Cys28 serves as a coordination point for [4Fe-4S] cluster. Residue Lys61 participates in GTP binding. Gly65 contacts S-adenosyl-L-methionine. Thr89 is a GTP binding site. Ser113 contributes to the S-adenosyl-L-methionine binding site. Lys150 lines the GTP pocket. Residues Cys245 and Cys248 each coordinate [4Fe-4S] cluster. 250-252 (RMR) serves as a coordination point for GTP. Cys262 serves as a coordination point for [4Fe-4S] cluster.

The protein belongs to the radical SAM superfamily. MoaA family. [4Fe-4S] cluster is required as a cofactor.

The catalysed reaction is GTP + AH2 + S-adenosyl-L-methionine = (8S)-3',8-cyclo-7,8-dihydroguanosine 5'-triphosphate + 5'-deoxyadenosine + L-methionine + A + H(+). Its pathway is cofactor biosynthesis; molybdopterin biosynthesis. Functionally, catalyzes the cyclization of GTP to (8S)-3',8-cyclo-7,8-dihydroguanosine 5'-triphosphate. This chain is Probable GTP 3',8-cyclase, found in Archaeoglobus fulgidus (strain ATCC 49558 / DSM 4304 / JCM 9628 / NBRC 100126 / VC-16).